Here is a 268-residue protein sequence, read N- to C-terminus: Shikimate dehydrogenase (NADP(+)) (268 aa).

Residues 13–15 (SLS) and T60 each bind shikimate. Residue K64 is the Proton acceptor of the active site. E76 contacts NADP(+). Positions 85 and 100 each coordinate shikimate. NADP(+) is bound by residues 124–128 (GAGGA), 148–153 (NRTMAR), and I209. Y211 lines the shikimate pocket. G232 is an NADP(+) binding site.

Belongs to the shikimate dehydrogenase family. As to quaternary structure, homodimer.

It carries out the reaction shikimate + NADP(+) = 3-dehydroshikimate + NADPH + H(+). It functions in the pathway metabolic intermediate biosynthesis; chorismate biosynthesis; chorismate from D-erythrose 4-phosphate and phosphoenolpyruvate: step 4/7. In terms of biological role, involved in the biosynthesis of the chorismate, which leads to the biosynthesis of aromatic amino acids. Catalyzes the reversible NADPH linked reduction of 3-dehydroshikimate (DHSA) to yield shikimate (SA). The chain is Shikimate dehydrogenase (NADP(+)) from Staphylococcus aureus (strain MSSA476).